We begin with the raw amino-acid sequence, 315 residues long: Ribosomal RNA small subunit methyltransferase H (315 aa).

Residues 35–37, D55, F84, D105, and Q112 contribute to the S-adenosyl-L-methionine site; that span reads AGH.

The protein belongs to the methyltransferase superfamily. RsmH family.

The protein resides in the cytoplasm. The catalysed reaction is cytidine(1402) in 16S rRNA + S-adenosyl-L-methionine = N(4)-methylcytidine(1402) in 16S rRNA + S-adenosyl-L-homocysteine + H(+). Specifically methylates the N4 position of cytidine in position 1402 (C1402) of 16S rRNA. The sequence is that of Ribosomal RNA small subunit methyltransferase H from Streptococcus agalactiae serotype III (strain NEM316).